Consider the following 237-residue polypeptide: Ras modification protein ERF4 (237 aa).

This sequence belongs to the ERF4 family. Interacts with ERF2.

The protein resides in the endoplasmic reticulum membrane. Functionally, the ERF2-SHR5 complex is a palmitoyltransferase specific for Ras proteins. Palmitoylates RAS2, which is required for its proper plasma membrane localization. The chain is Ras modification protein ERF4 (SHR5) from Saccharomyces cerevisiae (strain ATCC 204508 / S288c) (Baker's yeast).